The sequence spans 167 residues: UPF0114 protein Tola_1474 (167 aa).

Helical transmembrane passes span 15-35, 53-73, 109-129, and 136-156; these read IMAPIYLGLSLALLALGIKFF, LILIILSLIDISLVGGLIVMV, VAASIVAISSIHLLKVFMNTE, and IKWYLLIHITFVMSAFAMGYL.

It belongs to the UPF0114 family.

Its subcellular location is the cell membrane. This Tolumonas auensis (strain DSM 9187 / NBRC 110442 / TA 4) protein is UPF0114 protein Tola_1474.